The chain runs to 187 residues: UPF0340 protein SP_0663 (187 aa).

It belongs to the UPF0340 family.

The protein is UPF0340 protein SP_0663 of Streptococcus pneumoniae serotype 4 (strain ATCC BAA-334 / TIGR4).